The following is a 333-amino-acid chain: Cytosolic sulfotransferase 10 (333 aa).

76–81 lines the 3'-phosphoadenylyl sulfate pocket; that stretch reads KSGTTW. H146 acts as the Proton acceptor in catalysis. Residues R168, S176, Y234, and 299–301 contribute to the 3'-phosphoadenylyl sulfate site; that span reads RKG.

This sequence belongs to the sulfotransferase 1 family. In terms of tissue distribution, expressed in roots.

It is found in the cytoplasm. Sulfotransferase that utilizes 3'-phospho-5'-adenylyl sulfate (PAPS) as sulfonate donor to specifically catalyze the sulfate conjugation of brassinosteroids, including castasterone (CS), brassinolide (BL), related 24-epimers, and the naturally occurring (22R, 23R)-28-homobrassinosteroids. No activity on phenolic acids, desulfo-glucosinolates, flavonoids, steroids, gibberellic acids, cytokinins, phenylpropanoids, hydroxyjasmonates and coumarins. This chain is Cytosolic sulfotransferase 10 (SOT10), found in Arabidopsis thaliana (Mouse-ear cress).